The chain runs to 233 residues: Tropomyosin (233 aa).

Residues 6 to 222 (FDTVNEKYQE…KERYKAISDE (217 aa)) adopt a coiled-coil conformation. The interval 48 to 88 (MERSEERLQTATEKLEEASKAADESERNRKVLENLNNASEE) is disordered. Residues 51–79 (SEERLQTATEKLEEASKAADESERNRKVL) show a composition bias toward basic and acidic residues.

Belongs to the tropomyosin family. Homodimer.

Tropomyosin, in association with the troponin complex, plays a central role in the calcium dependent regulation of muscle contraction. In Magallana gigas (Pacific oyster), this protein is Tropomyosin.